A 240-amino-acid chain; its full sequence is Probable septum site-determining protein MinC (240 aa).

Belongs to the MinC family. In terms of assembly, interacts with MinD and FtsZ.

In terms of biological role, cell division inhibitor that blocks the formation of polar Z ring septums. Rapidly oscillates between the poles of the cell to destabilize FtsZ filaments that have formed before they mature into polar Z rings. Prevents FtsZ polymerization. The sequence is that of Probable septum site-determining protein MinC from Chromobacterium violaceum (strain ATCC 12472 / DSM 30191 / JCM 1249 / CCUG 213 / NBRC 12614 / NCIMB 9131 / NCTC 9757 / MK).